The chain runs to 93 residues: Co-chaperonin GroES 2 (93 aa).

The interval 1–20 is disordered; the sequence is MQPLGERIVVQREESETTTA.

The protein belongs to the GroES chaperonin family. Heptamer of 7 subunits arranged in a ring. Interacts with the chaperonin GroEL.

It is found in the cytoplasm. Together with the chaperonin GroEL, plays an essential role in assisting protein folding. The GroEL-GroES system forms a nano-cage that allows encapsulation of the non-native substrate proteins and provides a physical environment optimized to promote and accelerate protein folding. GroES binds to the apical surface of the GroEL ring, thereby capping the opening of the GroEL channel. The sequence is that of Co-chaperonin GroES 2 from Rhodopirellula baltica (strain DSM 10527 / NCIMB 13988 / SH1).